We begin with the raw amino-acid sequence, 243 residues long: Glutathione S-transferase omega-2 (243 aa).

The GST N-terminal domain occupies 22–101 (GLIRIYSMRF…YLDDAYPGRK (80 aa)). Cys32 functions as the Nucleophile in the catalytic mechanism. Glutathione contacts are provided by residues Lys59, Ile72, and 85-86 (ES). The GST C-terminal domain occupies 106–231 (DPYERARQKM…IFQGFLNLYF (126 aa)).

Belongs to the GST superfamily. Omega family. As to expression, expressed in a range of tissues, including the liver, kidney, skeletal muscle and prostate. Strongest expression in the testis.

The catalysed reaction is RX + glutathione = an S-substituted glutathione + a halide anion + H(+). The enzyme catalyses L-dehydroascorbate + 2 glutathione = glutathione disulfide + L-ascorbate. It catalyses the reaction methylarsonate + 2 glutathione + H(+) = methylarsonous acid + glutathione disulfide + H2O. In terms of biological role, exhibits glutathione-dependent thiol transferase activity. Has high dehydroascorbate reductase activity and may contribute to the recycling of ascorbic acid. Participates in the biotransformation of inorganic arsenic and reduces monomethylarsonic acid (MMA). In Homo sapiens (Human), this protein is Glutathione S-transferase omega-2 (GSTO2).